Reading from the N-terminus, the 501-residue chain is IQ domain-containing protein M (501 aa).

Over residues 237 to 247 (ERQPIKPEPKS) the composition is skewed to basic and acidic residues. The segment at 237–262 (ERQPIKPEPKSQPRIKGTPNKTDKLD) is disordered. In terms of domain architecture, IQ spans 290-319 (LIRMVTVMQAHVRGWLERKRLQRVMTKALD).

The chain is IQ domain-containing protein M from Homo sapiens (Human).